The following is a 414-amino-acid chain: DNA primase small subunit PriS (414 aa).

Residues Asp98, Asp100, and Asp312 contribute to the active site.

The protein belongs to the eukaryotic-type primase small subunit family. As to quaternary structure, heterodimer of a small subunit (PriS) and a large subunit (PriL). Mg(2+) serves as cofactor. Mn(2+) is required as a cofactor.

In terms of biological role, catalytic subunit of DNA primase, an RNA polymerase that catalyzes the synthesis of short RNA molecules used as primers for DNA polymerase during DNA replication. The small subunit contains the primase catalytic core and has DNA synthesis activity on its own. Binding to the large subunit stabilizes and modulates the activity, increasing the rate of DNA synthesis while decreasing the length of the DNA fragments, and conferring RNA synthesis capability. The DNA polymerase activity may enable DNA primase to also catalyze primer extension after primer synthesis. May also play a role in DNA repair. The chain is DNA primase small subunit PriS from Methanosarcina mazei (strain ATCC BAA-159 / DSM 3647 / Goe1 / Go1 / JCM 11833 / OCM 88) (Methanosarcina frisia).